A 1685-amino-acid polypeptide reads, in one-letter code: PHD and RING finger domain-containing protein 1 (1685 aa).

A disordered region spans residues 1–82 (MDDDNLDELV…GSEDSEDGIE (82 aa)). The span at 41 to 81 (DSEDDTGSEQDDDTDGEETEGLSEEEDPEDRSGSEDSEDGI) shows a compositional bias: acidic residues. The RING-type; degenerate zinc finger occupies 109-150 (CPICLNAFRDQAVGTPETCAHYFCLDCIIEWSRNANSCPVDR). The PHD-type zinc finger occupies 188-238 (PTFCEVCGRSDREDRLLLCDGCDAGYHMECLDPPLQEVPVDEWFCPECAVP). 5 disordered regions span residues 333–390 (PLTP…KLKN), 449–483 (DSNG…VARP), 537–590 (SAKR…GLSC), 606–777 (TPVR…GSSF), and 809–860 (KVQR…LLPS). Thr-335 carries the phosphothreonine modification. Composition is skewed to basic residues over residues 339-364 (PAKR…RSSV) and 372-387 (RAKK…KGRK). Phosphoserine is present on residues Ser-450 and Ser-460. Composition is skewed to polar residues over residues 606–625 (TPVR…GNLS) and 637–662 (SPRL…NFPS). Basic and acidic residues predominate over residues 671–682 (QKTDPRRPDFSK). 2 stretches are compositionally biased toward polar residues: residues 694–709 (SNST…QTVE) and 737–751 (SSRG…TSGS). Phosphoserine is present on residues Ser-817, Ser-848, Ser-849, Ser-867, Ser-870, Ser-922, Ser-948, Ser-984, and Ser-1002. Positions 835–860 (PFDPTGSDSSPPSSSPESLGSGLLPS) are enriched in low complexity. Disordered stretches follow at residues 892-1229 (GTEM…VSEV), 1290-1355 (QLDD…APSD), and 1369-1390 (TTLS…SGRG). Acidic residues predominate over residues 922-934 (SDLEQEGLGEIEP). Positions 1001–1010 (SSRSRSTSSS) are enriched in low complexity. Basic residues-rich tracts occupy residues 1011-1031 (RSRK…RTRS) and 1054-1064 (KRHRAKTKSRR). Residues 1065–1075 (SSSDRASSQDR) are compositionally biased toward basic and acidic residues. 2 stretches are compositionally biased toward basic residues: residues 1089 to 1102 (GPWG…KSRS) and 1117 to 1129 (SRRR…GSRS). Composition is skewed to basic and acidic residues over residues 1130–1143 (RGRD…LERD) and 1151–1165 (RSRE…MTRS). Residues Ser-1135 and Ser-1139 each carry the phosphoserine modification. Basic residues predominate over residues 1181-1191 (RTRRPHSREKH). A compositionally biased stretch (basic and acidic residues) spans 1192 to 1201 (PHSPEKKGAV). Position 1205 is a phosphoserine (Ser-1205). A compositionally biased stretch (low complexity) spans 1292–1305 (DDMSSPPSPESTDS). Residues Ser-1372 and Ser-1383 each carry the phosphoserine modification. Position 1416 is a phosphothreonine (Thr-1416). Disordered stretches follow at residues 1421–1448 (EAEA…EGDW), 1466–1501 (LPPP…VGTL), and 1569–1591 (LAVP…AEKT). Residues 1577–1591 (SEERTATPKTAAEKT) are compositionally biased toward basic and acidic residues. Residues 1589–1615 (EKTKKEEYMKKLHMQERAVEEVKLAIK) adopt a coiled-coil conformation.

As to quaternary structure, interacts with POLR2A (via the C-terminal domain).

The sequence is that of PHD and RING finger domain-containing protein 1 from Rattus norvegicus (Rat).